The primary structure comprises 78 residues: Sec-independent protein translocase protein TatA (78 aa).

The chain crosses the membrane as a helical span at residues 1–21; it reads MGSLSIWHWIVVLAVVLLLFG. The disordered stretch occupies residues 43-78; sequence LAEDDEPAKTPAAPPEAPRPLPHQTSSAAEAEKKPV. The span at 54-63 shows a compositional bias: pro residues; the sequence is AAPPEAPRPL.

The protein belongs to the TatA/E family. In terms of assembly, the Tat system comprises two distinct complexes: a TatABC complex, containing multiple copies of TatA, TatB and TatC subunits, and a separate TatA complex, containing only TatA subunits. Substrates initially bind to the TatABC complex, which probably triggers association of the separate TatA complex to form the active translocon.

The protein localises to the cell inner membrane. Its function is as follows. Part of the twin-arginine translocation (Tat) system that transports large folded proteins containing a characteristic twin-arginine motif in their signal peptide across membranes. TatA could form the protein-conducting channel of the Tat system. This Xanthobacter autotrophicus (strain ATCC BAA-1158 / Py2) protein is Sec-independent protein translocase protein TatA.